A 109-amino-acid chain; its full sequence is MPFYEFAFIAQQGLTQYELEGLSKGLTALLVKMGAELVKYEYWGLLDFVYSIAKNNKGHYCMMYIRAEPAAMDEFKRKVKLNEDVLRFLCLKVDKVPEGRSAMMGSDQD.

This sequence belongs to the bacterial ribosomal protein bS6 family.

In terms of biological role, binds together with bS18 to 16S ribosomal RNA. In Anaplasma phagocytophilum (strain HZ), this protein is Small ribosomal subunit protein bS6.